The following is an 80-amino-acid chain: U-actitoxin-Avd9a (80 aa).

The first 20 residues, 1-20, serve as a signal peptide directing secretion; the sequence is MNLKVLAVFVLCAILVVVTA. The propeptide occupies 21–39; the sequence is ERRGTETGVYKKDTLQDLI. The ShKT domain occupies 45–80; it reads CIDRFPTGTCKQVKKGGSCKNSDKYRMNCRKTCGLC. Disulfide bonds link Cys45/Cys80, Cys54/Cys73, and Cys63/Cys77. The segment at 68–69 is crucial for binding to potassium channels; the sequence is KY.

This sequence belongs to the sea anemone type 1 potassium channel toxin family. Type 1b subfamily.

Its subcellular location is the secreted. It is found in the nematocyst. In terms of biological role, inhibits voltage-gated potassium channels (Kv1/KCNA). The sequence is that of U-actitoxin-Avd9a from Anemonia viridis (Snakelocks anemone).